Reading from the N-terminus, the 449-residue chain is Bifunctional F420 biosynthesis protein FbiB (449 aa).

Positions 1 to 245 are coenzyme F420:L-glutamate ligase; sequence MSPAGEHGTA…PGTEDLFWLG (245 aa). Residues 21-24, S51, and K56 contribute to the GTP site; that span reads LPEF. Residue D110 participates in a divalent metal cation binding. GTP is bound at residue N113. Residues D151 and T152 each contribute to the a divalent metal cation site. A dehydro-coenzyme F420-0 reductase region spans residues 246–449; the sequence is TAEAIELGRR…ADPGDLLIRK (204 aa). FMN contacts are provided by residues 261–265 and A289; that span reads RRSVR. Residue D321 participates in coenzyme F420-(gamma-Glu)n binding. Residues G400 and R437 each contribute to the FMN site.

It in the N-terminal section; belongs to the CofE family. Mg(2+) serves as cofactor. Requires Mn(2+) as cofactor. The cofactor is K(+).

It carries out the reaction oxidized coenzyme F420-0 + GTP + L-glutamate = oxidized coenzyme F420-1 + GDP + phosphate + H(+). It catalyses the reaction oxidized coenzyme F420-1 + GTP + L-glutamate = oxidized coenzyme F420-2 + GDP + phosphate + H(+). The catalysed reaction is oxidized coenzyme F420-(gamma-L-Glu)(n) + GTP + L-glutamate = oxidized coenzyme F420-(gamma-L-Glu)(n+1) + GDP + phosphate + H(+). The enzyme catalyses oxidized coenzyme F420-0 + FMN + H(+) = dehydro coenzyme F420-0 + FMNH2. It functions in the pathway cofactor biosynthesis; coenzyme F420 biosynthesis. Functionally, bifunctional enzyme that catalyzes the GTP-dependent successive addition of multiple gamma-linked L-glutamates to the L-lactyl phosphodiester of 7,8-didemethyl-8-hydroxy-5-deazariboflavin (F420-0) to form polyglutamated F420 derivatives, and the FMNH2-dependent reduction of dehydro-F420-0 to form F420-0. The protein is Bifunctional F420 biosynthesis protein FbiB of Mycobacterium avium (strain 104).